The following is a 109-amino-acid chain: Avian agnoprotein 2b (109 aa).

Residues 89–109 (QPALASRLTQPNRPNRGRLAK) form a disordered region.

It localises to the host cytoplasm. The protein is Avian agnoprotein 2b of Psittacidae (parrots).